We begin with the raw amino-acid sequence, 389 residues long: MLLTLAQWLQNDYSFLRVVNYLTFRAVMANVTALVIGLGFGPWVIRRLTELKIGQAVRTIGPQTHLVKAGTPTMGGVLVLISIAISTLLWCDWGNRFIWVVLLVTLGYGAIGWVDDYRKVVYRDPRGMSSREKFFWQTLIGLVAAVYLAFSVSEASNVRIWSLFLSWIEGGMFADVPYKMNLIVPFFKEVSYPLGVTGFIVLTYLVIVGSSNAVNLTDGLDGLVIMPVVLVGGGLGVFAYVMGNAVYSKYLLFPHIPGAGELLIFCSAMAGAGLAFLWFNAHPARVFMGDVGALALGGALGTVAVIVRQEIVLFVMGGIFVVETLSVMLQVSWFKFTKRRYGEGRRLFRMAPLHHHFELGGWKETQVTVRFWIITMLLVLIGLSSLKLR.

The next 11 helical transmembrane spans lie at 25–45 (RAVMANVTALVIGLGFGPWVI), 74–94 (MGGVLVLISIAISTLLWCDWG), 97–117 (FIWVVLLVTLGYGAIGWVDDY), 134–154 (FFWQTLIGLVAAVYLAFSVSE), 167–187 (WIEGGMFADVPYKMNLIVPFF), 190–210 (VSYPLGVTGFIVLTYLVIVGS), 222–242 (GLVIMPVVLVGGGLGVFAYVM), 259–279 (AGELLIFCSAMAGAGLAFLWF), 286–306 (VFMGDVGALALGGALGTVAVI), 311–331 (IVLFVMGGIFVVETLSVMLQV), and 366–386 (QVTVRFWIITMLLVLIGLSSL).

This sequence belongs to the glycosyltransferase 4 family. MraY subfamily. It depends on Mg(2+) as a cofactor.

The protein localises to the cell inner membrane. It carries out the reaction UDP-N-acetyl-alpha-D-muramoyl-L-alanyl-gamma-D-glutamyl-meso-2,6-diaminopimeloyl-D-alanyl-D-alanine + di-trans,octa-cis-undecaprenyl phosphate = di-trans,octa-cis-undecaprenyl diphospho-N-acetyl-alpha-D-muramoyl-L-alanyl-D-glutamyl-meso-2,6-diaminopimeloyl-D-alanyl-D-alanine + UMP. Its pathway is cell wall biogenesis; peptidoglycan biosynthesis. Catalyzes the initial step of the lipid cycle reactions in the biosynthesis of the cell wall peptidoglycan: transfers peptidoglycan precursor phospho-MurNAc-pentapeptide from UDP-MurNAc-pentapeptide onto the lipid carrier undecaprenyl phosphate, yielding undecaprenyl-pyrophosphoryl-MurNAc-pentapeptide, known as lipid I. The polypeptide is Phospho-N-acetylmuramoyl-pentapeptide-transferase (Cupriavidus metallidurans (strain ATCC 43123 / DSM 2839 / NBRC 102507 / CH34) (Ralstonia metallidurans)).